We begin with the raw amino-acid sequence, 1342 residues long: DNA-directed RNA polymerase subunit beta (1342 aa).

Residues lysine 1022 and lysine 1200 each carry the N6-acetyllysine modification.

It belongs to the RNA polymerase beta chain family. The RNAP catalytic core consists of 2 alpha, 1 beta, 1 beta' and 1 omega subunit. When a sigma factor is associated with the core the holoenzyme is formed, which can initiate transcription.

It catalyses the reaction RNA(n) + a ribonucleoside 5'-triphosphate = RNA(n+1) + diphosphate. DNA-dependent RNA polymerase catalyzes the transcription of DNA into RNA using the four ribonucleoside triphosphates as substrates. The protein is DNA-directed RNA polymerase subunit beta of Shigella flexneri serotype 5b (strain 8401).